The primary structure comprises 999 residues: RING finger domain and kelch repeat-containing protein DDB_G0271372 (999 aa).

The RING-type zinc-finger motif lies at 7-49 (CPNCLKVFNNPRQLECDHILCTRCIEGVYNPGRTPIIKCPVCD). The span at 92-143 (STGSSNNNNNNNNNNNNNNNNFVINNSNNKNNGATTTTTTTTTTTNSNSNST) shows a compositional bias: low complexity. 2 disordered regions span residues 92-147 (STGS…KSKV) and 159-209 (ASPK…SSPP). Polar residues predominate over residues 165-196 (GSSQGSLTTINNQKKLTLSPQRASSTTTTSVN). The segment at 258-302 (AELSKCNDHDQKKFTIFCTDCDQLLCDECLNNNQQQHENHQLNKI) adopts a B box-type zinc-finger fold. Zn(2+) is bound by residues Cys-263, His-266, Cys-286, and His-294. Residues 355-402 (DIDTMIENLKERKNALISQIDKEYEEQKLELKDQIETINTTIVDIQNN) are a coiled coil. 2 stretches are compositionally biased toward low complexity: residues 485–516 (GVSS…IITT) and 526–536 (SPSPTSSSSST). Residues 485–637 (GVSSSPTGTG…TSTNGSNTKI (153 aa)) are disordered. Residues 552 to 612 (LSSQNYDNFG…SHGSKLNDNI (61 aa)) are compositionally biased toward polar residues. The segment covering 613-635 (NTNNNNSPSPTSSSTTSTNGSNT) has biased composition (low complexity). Kelch repeat units lie at residues 655-700 (ITAR…YDNN), 702-745 (TIYR…VFDG), 748-793 (YIYL…YHPT), 796-842 (CIYV…FDGS), and 844-892 (YINI…SMNL). The segment covering 904-924 (NSFSSISSHSSLNSSSSNNGI) has biased composition (low complexity). The tract at residues 904-936 (NSFSSISSHSSLNSSSSNNGISGSGGSGGDNEI) is disordered.

In Dictyostelium discoideum (Social amoeba), this protein is RING finger domain and kelch repeat-containing protein DDB_G0271372.